We begin with the raw amino-acid sequence, 232 residues long: Exosome complex component RRP40 (232 aa).

This sequence belongs to the RRP40 family. As to quaternary structure, component of the RNA exosome complex. Specifically part of the catalytically inactive RNA exosome core complex.

The protein resides in the cytoplasm. The protein localises to the nucleus. It localises to the nucleolus. Non-catalytic component of the RNA exosome complex which has 3'-&gt;5' exoribonuclease activity and participates in a multitude of cellular RNA processing and degradation events. In the nucleus, the RNA exosome complex is involved in proper maturation of stable RNA species such as rRNA, snRNA and snoRNA, in the elimination of RNA processing by-products and non-coding 'pervasive' transcripts such as antisense RNA species, and of mRNAs with processing defects, thereby limiting or excluding their export to the cytoplasm. In the cytoplasm, the RNA exosome complex is involved in general mRNA turnover and specifically degrades inherently unstable mRNAs containing AU-rich elements (AREs) within their 3' untranslated regions, and in RNA surveillance pathways, preventing translation of aberrant mRNAs. The catalytic inactive RNA exosome core complex of 9 subunits is proposed to play a pivotal role in the binding and presentation of RNA for ribonucleolysis, and to serve as a scaffold for the association with catalytic subunits and accessory proteins or complexes. Required generally for normal embryonic and neuronal development. Also plays a critical role in the maintenance of neuronal function in mature flies by controlling the levels of specific mRNAs such as the synaptic regulator Arc1. The chain is Exosome complex component RRP40 from Drosophila melanogaster (Fruit fly).